A 368-amino-acid polypeptide reads, in one-letter code: Cytochrome b (368 aa).

The next 4 membrane-spanning stretches (helical) occupy residues 32-52, 76-98, 112-132, and 174-194; these read FGFL…TLAF, WEFR…IHMT, AWMS…LGYV, and FFVL…LHIF. Positions 82 and 96 each coordinate heme b. Residues His-178 and His-192 each contribute to the heme b site. His-197 contributes to the a ubiquinone binding site. 4 helical membrane passes run 219–239, 285–305, 323–343, and 347–367; these read MLMT…LQAA, GLLV…IRAL, GWVI…SAIP, and YILY…VLCL.

Belongs to the cytochrome b family. In terms of assembly, the main subunits of complex b-c1 are: cytochrome b, cytochrome c1 and the Rieske protein. It depends on heme b as a cofactor.

The protein localises to the mitochondrion inner membrane. In terms of biological role, component of the ubiquinol-cytochrome c reductase complex (complex III or cytochrome b-c1 complex) that is part of the mitochondrial respiratory chain. The b-c1 complex mediates electron transfer from ubiquinol to cytochrome c. Contributes to the generation of a proton gradient across the mitochondrial membrane that is then used for ATP synthesis. This is Cytochrome b (MT-CYB) from Toxoplasma gondii.